A 387-amino-acid chain; its full sequence is Queuine tRNA-ribosyltransferase (387 aa).

Asp-102 (proton acceptor) is an active-site residue. Substrate is bound by residues 102–106 (DSGGF), Asp-156, Gln-205, and Gly-232. The segment at 263 to 269 (GVGTPED) is RNA binding. Asp-282 acts as the Nucleophile in catalysis. The RNA binding; important for wobble base 34 recognition stretch occupies residues 287–291 (TRNAR). Cys-320, Cys-322, Cys-325, and His-351 together coordinate Zn(2+).

This sequence belongs to the queuine tRNA-ribosyltransferase family. Homodimer. Within each dimer, one monomer is responsible for RNA recognition and catalysis, while the other monomer binds to the replacement base PreQ1. Zn(2+) is required as a cofactor.

The enzyme catalyses 7-aminomethyl-7-carbaguanine + guanosine(34) in tRNA = 7-aminomethyl-7-carbaguanosine(34) in tRNA + guanine. Its pathway is tRNA modification; tRNA-queuosine biosynthesis. Functionally, catalyzes the base-exchange of a guanine (G) residue with the queuine precursor 7-aminomethyl-7-deazaguanine (PreQ1) at position 34 (anticodon wobble position) in tRNAs with GU(N) anticodons (tRNA-Asp, -Asn, -His and -Tyr). Catalysis occurs through a double-displacement mechanism. The nucleophile active site attacks the C1' of nucleotide 34 to detach the guanine base from the RNA, forming a covalent enzyme-RNA intermediate. The proton acceptor active site deprotonates the incoming PreQ1, allowing a nucleophilic attack on the C1' of the ribose to form the product. After dissociation, two additional enzymatic reactions on the tRNA convert PreQ1 to queuine (Q), resulting in the hypermodified nucleoside queuosine (7-(((4,5-cis-dihydroxy-2-cyclopenten-1-yl)amino)methyl)-7-deazaguanosine). In Polaromonas naphthalenivorans (strain CJ2), this protein is Queuine tRNA-ribosyltransferase.